Reading from the N-terminus, the 520-residue chain is Basal body-orientation factor 1 (520 aa).

Basic residues predominate over residues 1 to 21 (MPKKKGKGKGKGKGKGKGKKD). The interval 1–34 (MPKKKGKGKGKGKGKGKGKKDGKHDSKADRESEI) is disordered. The span at 22–34 (GKHDSKADRESEI) shows a compositional bias: basic and acidic residues. Coiled-coil stretches lie at residues 27-175 (KADR…REKM) and 245-386 (VKEA…RQEA). Residues 468–492 (AHPPALSASSSEKIQVSSDAGSTVE) are disordered. Residues 469-478 (HPPALSASSS) are compositionally biased toward low complexity. Residues 479 to 492 (EKIQVSSDAGSTVE) are compositionally biased toward polar residues.

This sequence belongs to the BBOF1 family.

It is found in the cytoplasm. The protein resides in the cytoskeleton. The protein localises to the cilium basal body. In terms of biological role, basal body protein required in multiciliate cells to align and maintain cilia orientation in response to flow. May act by mediating a maturation step that stabilizes and aligns cilia orientation. Not required to respond to planar cell polarity (PCP) or flow-based orientation cues. This chain is Basal body-orientation factor 1, found in Danio rerio (Zebrafish).